Reading from the N-terminus, the 244-residue chain is Haloacid dehalogenase-like hydrolase domain-containing protein Sgpp (244 aa).

The Nucleophile role is filled by aspartate 28. 3 residues coordinate Mg(2+): aspartate 28, aspartate 30, and aspartate 189. Aspartate 30 acts as the Proton donor in catalysis.

It belongs to the HAD-like hydrolase superfamily. DOG/GPP family. Mg(2+) is required as a cofactor. In terms of tissue distribution, ubiquitous with highest expression in flowers.

Functionally, acts as a phosphosugar phosphatase on a broad range of sugar phosphate substrates with preferential activity on D-ribose-5-phosphate, 2-deoxy-D-ribose-5-phosphate, 2-deoxy-D-glucose-6-phosphate, and D-mannose-6-phosphate and with a lower activity on D-fructose-1-phosphate, D-glucose-6-phosphate, DL-glycerol-3-phosphate, and D-fructose-6-phosphate. The chain is Haloacid dehalogenase-like hydrolase domain-containing protein Sgpp (SGPP) from Arabidopsis thaliana (Mouse-ear cress).